We begin with the raw amino-acid sequence, 636 residues long: Cysteine-rich receptor-like protein kinase 24 (636 aa).

Positions 1–20 (MVKFLVIFWFVVISFSHVSA) are cleaved as a signal peptide. Gnk2-homologous domains lie at 21–124 (QVCL…NRSF) and 130–235 (MEIL…LYPF). Over 21-254 (QVCLERSGFF…RQKDGKSIST (234 aa)) the chain is Extracellular. N-linked (GlcNAc...) asparagine glycosylation is found at Asn-33, Asn-50, Asn-98, Asn-101, Asn-121, Asn-137, Asn-145, and Asn-197. Residues 255–275 (GAIVAIIVVPILLLALGVGLW) traverse the membrane as a helical segment. Residues 276-636 (KRRKAYKTKT…SVSVTCVSPR (361 aa)) are Cytoplasmic-facing. The Protein kinase domain occupies 312–585 (FHNVNKLGHG…TMSTVFHMLT (274 aa)). Residues 318–326 (LGHGGFGEV) and Lys-340 contribute to the ATP site. Asp-437 acts as the Proton acceptor in catalysis.

Belongs to the protein kinase superfamily. Ser/Thr protein kinase family. CRK subfamily.

The protein localises to the membrane. It carries out the reaction L-seryl-[protein] + ATP = O-phospho-L-seryl-[protein] + ADP + H(+). The enzyme catalyses L-threonyl-[protein] + ATP = O-phospho-L-threonyl-[protein] + ADP + H(+). This chain is Cysteine-rich receptor-like protein kinase 24 (CRK24), found in Arabidopsis thaliana (Mouse-ear cress).